A 372-amino-acid polypeptide reads, in one-letter code: Peptidyl-prolyl cis-trans isomerase D (372 aa).

A PPIase cyclophilin-type domain is found at 9–175 (FFDISIGGKP…KEVKIEDCGV (167 aa)). 3 TPR repeats span residues 220 to 253 (VEAV…LKQY), 271 to 304 (VSLF…DNTD), and 309 to 342 (AKAL…QPHD).

The protein belongs to the cyclophilin-type PPIase family. PPIase D subfamily.

The protein resides in the cytoplasm. The enzyme catalyses [protein]-peptidylproline (omega=180) = [protein]-peptidylproline (omega=0). Functionally, PPIases accelerate the folding of proteins. It catalyzes the cis-trans isomerization of proline imidic peptide bonds in oligopeptides. The protein is Peptidyl-prolyl cis-trans isomerase D (CPR6) of Kluyveromyces lactis (strain ATCC 8585 / CBS 2359 / DSM 70799 / NBRC 1267 / NRRL Y-1140 / WM37) (Yeast).